Reading from the N-terminus, the 158-residue chain is MSVSVCPCGSGNLLDACCGHYHAGTPAPDAQALMRSRYSAYVLGLVDYLVATTLPAQQAGLDRAAMADWSAQSTWLGLEVESAEVLGGQPEHSFVTFTARWHDQDGDHQHRERSAFVQHAGRWYFIDPTVGLKAGRNDPCPCASGHKFKKCCASYVGN.

This sequence belongs to the UPF0225 family.

The chain is UPF0225 protein Pput_1155 from Pseudomonas putida (strain ATCC 700007 / DSM 6899 / JCM 31910 / BCRC 17059 / LMG 24140 / F1).